A 31-amino-acid chain; its full sequence is Cytochrome b6-f complex subunit 6 (31 aa).

A helical membrane pass occupies residues 4–26 (LTSYFGFLLAALTITSALFIGLN).

Belongs to the PetL family. The 4 large subunits of the cytochrome b6-f complex are cytochrome b6, subunit IV (17 kDa polypeptide, PetD), cytochrome f and the Rieske protein, while the 4 small subunits are PetG, PetL, PetM and PetN. The complex functions as a dimer.

Its subcellular location is the plastid. The protein resides in the chloroplast thylakoid membrane. Its function is as follows. Component of the cytochrome b6-f complex, which mediates electron transfer between photosystem II (PSII) and photosystem I (PSI), cyclic electron flow around PSI, and state transitions. PetL is important for photoautotrophic growth as well as for electron transfer efficiency and stability of the cytochrome b6-f complex. This is Cytochrome b6-f complex subunit 6 from Amaranthus caudatus (Love-lies-bleeding).